Here is a 137-residue protein sequence, read N- to C-terminus: UPF0768 protein C1952.04c (137 aa).

The span at Gln-79–Glu-93 shows a compositional bias: basic and acidic residues. Residues Gln-79–Lys-137 are disordered. Residues Pro-119–Lys-137 show a composition bias toward pro residues.

This sequence belongs to the UPF0768 family.

This Schizosaccharomyces pombe (strain 972 / ATCC 24843) (Fission yeast) protein is UPF0768 protein C1952.04c.